Reading from the N-terminus, the 223-residue chain is Mating-type protein ALPHA2 (223 aa).

The segment at residues 151–213 is a DNA-binding region (homeobox; TALE-type); sequence EFKKGKRFLK…NRRRKDKITE (63 aa).

It belongs to the TALE/M-ATYP homeobox family. Forms a heterodimer with A1.

Its subcellular location is the nucleus. In terms of biological role, mating type proteins are sequence specific DNA-binding proteins that act as master switches in yeast differentiation by controlling gene expression in a cell type-specific fashion. Transcriptional corepressor that acts in conjunction with A1 to repress transcription of haploid-specific genes. This is Mating-type protein ALPHA2 (HMLALPHA2) from Kluyveromyces lactis (strain ATCC 8585 / CBS 2359 / DSM 70799 / NBRC 1267 / NRRL Y-1140 / WM37) (Yeast).